The chain runs to 437 residues: UDP-N-acetylmuramate--L-alanine ligase (437 aa).

108–114 (GAHGKTS) lines the ATP pocket.

The protein belongs to the MurCDEF family.

It localises to the cytoplasm. The enzyme catalyses UDP-N-acetyl-alpha-D-muramate + L-alanine + ATP = UDP-N-acetyl-alpha-D-muramoyl-L-alanine + ADP + phosphate + H(+). It participates in cell wall biogenesis; peptidoglycan biosynthesis. Its function is as follows. Cell wall formation. This chain is UDP-N-acetylmuramate--L-alanine ligase, found in Staphylococcus aureus.